The sequence spans 323 residues: Lipoyl synthase (323 aa).

A compositionally biased stretch (basic and acidic residues) spans 1–14 (MVTILDRTKPDDKR). The disordered stretch occupies residues 1–25 (MVTILDRTKPDDKRIRHPEKAHKPD). [4Fe-4S] cluster contacts are provided by cysteine 61, cysteine 66, cysteine 72, cysteine 87, cysteine 91, cysteine 94, and serine 300. Residues 73–289 (WEKKHATFMI…EDIAYTKGFL (217 aa)) form the Radical SAM core domain.

It belongs to the radical SAM superfamily. Lipoyl synthase family. Requires [4Fe-4S] cluster as cofactor.

Its subcellular location is the cytoplasm. It catalyses the reaction [[Fe-S] cluster scaffold protein carrying a second [4Fe-4S](2+) cluster] + N(6)-octanoyl-L-lysyl-[protein] + 2 oxidized [2Fe-2S]-[ferredoxin] + 2 S-adenosyl-L-methionine + 4 H(+) = [[Fe-S] cluster scaffold protein] + N(6)-[(R)-dihydrolipoyl]-L-lysyl-[protein] + 4 Fe(3+) + 2 hydrogen sulfide + 2 5'-deoxyadenosine + 2 L-methionine + 2 reduced [2Fe-2S]-[ferredoxin]. It functions in the pathway protein modification; protein lipoylation via endogenous pathway; protein N(6)-(lipoyl)lysine from octanoyl-[acyl-carrier-protein]: step 2/2. Catalyzes the radical-mediated insertion of two sulfur atoms into the C-6 and C-8 positions of the octanoyl moiety bound to the lipoyl domains of lipoate-dependent enzymes, thereby converting the octanoylated domains into lipoylated derivatives. In Allorhizobium ampelinum (strain ATCC BAA-846 / DSM 112012 / S4) (Agrobacterium vitis (strain S4)), this protein is Lipoyl synthase.